Reading from the N-terminus, the 451-residue chain is Bifunctional protein GlmU (451 aa).

The segment at 1 to 225 (MVVVAILAAG…YQEILGINDR (225 aa)) is pyrophosphorylase. UDP-N-acetyl-alpha-D-glucosamine contacts are provided by residues 7–10 (LAAG), lysine 21, glutamine 72, and 77–78 (GT). Position 102 (aspartate 102) interacts with Mg(2+). Positions 139, 154, 169, and 223 each coordinate UDP-N-acetyl-alpha-D-glucosamine. Asparagine 223 provides a ligand contact to Mg(2+). Residues 226–246 (LQLATAYEILQRRVKEQWMMA) form a linker region. The N-acetyltransferase stretch occupies residues 247 to 451 (GVTLIDPNSI…PGWRKKSGES (205 aa)). Residues arginine 328 and lysine 346 each coordinate UDP-N-acetyl-alpha-D-glucosamine. The active-site Proton acceptor is the histidine 358. UDP-N-acetyl-alpha-D-glucosamine contacts are provided by tyrosine 361 and asparagine 372. Residues alanine 375, 381-382 (NY), serine 400, alanine 418, and arginine 435 each bind acetyl-CoA.

The protein in the N-terminal section; belongs to the N-acetylglucosamine-1-phosphate uridyltransferase family. It in the C-terminal section; belongs to the transferase hexapeptide repeat family. In terms of assembly, homotrimer. The cofactor is Mg(2+).

Its subcellular location is the cytoplasm. It catalyses the reaction alpha-D-glucosamine 1-phosphate + acetyl-CoA = N-acetyl-alpha-D-glucosamine 1-phosphate + CoA + H(+). The catalysed reaction is N-acetyl-alpha-D-glucosamine 1-phosphate + UTP + H(+) = UDP-N-acetyl-alpha-D-glucosamine + diphosphate. It participates in nucleotide-sugar biosynthesis; UDP-N-acetyl-alpha-D-glucosamine biosynthesis; N-acetyl-alpha-D-glucosamine 1-phosphate from alpha-D-glucosamine 6-phosphate (route II): step 2/2. The protein operates within nucleotide-sugar biosynthesis; UDP-N-acetyl-alpha-D-glucosamine biosynthesis; UDP-N-acetyl-alpha-D-glucosamine from N-acetyl-alpha-D-glucosamine 1-phosphate: step 1/1. It functions in the pathway bacterial outer membrane biogenesis; LPS lipid A biosynthesis. In terms of biological role, catalyzes the last two sequential reactions in the de novo biosynthetic pathway for UDP-N-acetylglucosamine (UDP-GlcNAc). The C-terminal domain catalyzes the transfer of acetyl group from acetyl coenzyme A to glucosamine-1-phosphate (GlcN-1-P) to produce N-acetylglucosamine-1-phosphate (GlcNAc-1-P), which is converted into UDP-GlcNAc by the transfer of uridine 5-monophosphate (from uridine 5-triphosphate), a reaction catalyzed by the N-terminal domain. This Trichormus variabilis (strain ATCC 29413 / PCC 7937) (Anabaena variabilis) protein is Bifunctional protein GlmU.